Reading from the N-terminus, the 45-residue chain is MEYVKFLEDYVREKVKKMFSSNVKLSFNDLKVSAKIVELKKRGVK.

This is an uncharacterized protein from Methanocaldococcus jannaschii (strain ATCC 43067 / DSM 2661 / JAL-1 / JCM 10045 / NBRC 100440) (Methanococcus jannaschii).